The primary structure comprises 436 residues: Protein translocase subunit SecY (436 aa).

A run of 10 helical transmembrane segments spans residues 19 to 39 (ILFT…TVPG), 68 to 88 (FSVF…VQLL), 116 to 136 (YISL…FNAL), 151 to 171 (LFIG…GEQI), 179 to 199 (GVSM…VKGI), 216 to 236 (IIFV…TTYV), 269 to 289 (VIPV…LQFL), 313 to 333 (GIAM…FVQI), 372 to 392 (VGSL…DLFG), and 395 to 415 (DTVA…IEGM).

This sequence belongs to the SecY/SEC61-alpha family. As to quaternary structure, component of the Sec protein translocase complex. Heterotrimer consisting of SecY, SecE and SecG subunits. The heterotrimers can form oligomers, although 1 heterotrimer is thought to be able to translocate proteins. Interacts with the ribosome. Interacts with SecDF, and other proteins may be involved. Interacts with SecA.

The protein resides in the cell membrane. Functionally, the central subunit of the protein translocation channel SecYEG. Consists of two halves formed by TMs 1-5 and 6-10. These two domains form a lateral gate at the front which open onto the bilayer between TMs 2 and 7, and are clamped together by SecE at the back. The channel is closed by both a pore ring composed of hydrophobic SecY resides and a short helix (helix 2A) on the extracellular side of the membrane which forms a plug. The plug probably moves laterally to allow the channel to open. The ring and the pore may move independently. The protein is Protein translocase subunit SecY of Streptococcus gordonii (strain Challis / ATCC 35105 / BCRC 15272 / CH1 / DL1 / V288).